Here is a 199-residue protein sequence, read N- to C-terminus: Peptidyl-tRNA hydrolase (199 aa).

TRNA is bound at residue Tyr-15. His-20 serves as the catalytic Proton acceptor. 3 residues coordinate tRNA: Phe-66, Asn-68, and Asn-114.

This sequence belongs to the PTH family. As to quaternary structure, monomer.

The protein localises to the cytoplasm. The enzyme catalyses an N-acyl-L-alpha-aminoacyl-tRNA + H2O = an N-acyl-L-amino acid + a tRNA + H(+). Functionally, hydrolyzes ribosome-free peptidyl-tRNAs (with 1 or more amino acids incorporated), which drop off the ribosome during protein synthesis, or as a result of ribosome stalling. In terms of biological role, catalyzes the release of premature peptidyl moieties from peptidyl-tRNA molecules trapped in stalled 50S ribosomal subunits, and thus maintains levels of free tRNAs and 50S ribosomes. This is Peptidyl-tRNA hydrolase from Cupriavidus pinatubonensis (strain JMP 134 / LMG 1197) (Cupriavidus necator (strain JMP 134)).